The chain runs to 1767 residues: Trans-Golgi network-localized SYP41-interacting protein 1 (1767 aa).

The disordered stretch occupies residues 1-72; the sequence is MHEKDDLPQD…LTTDDDDNDD (72 aa). At 1-1748 the chain is on the cytoplasmic side; sequence MHEKDDLPQD…RVLMSRPQAR (1748 aa). A compositionally biased stretch (acidic residues) spans 16-32; the sequence is IENDDESNGQEEEELDP. Coiled coils occupy residues 276–436, 493–516, 570–590, 684–805, and 845–1082; these read LSHL…MSTA, VRSLAEERKELTNVSQEYNRLKDL, KSNIRKELDDLSFSLKKMEET, VSNL…LQQS, and IQEV…LSSK. The span at 1177–1190 shows a compositional bias: polar residues; the sequence is DNSVNTEPENSQGS. Positions 1177–1198 are disordered; it reads DNSVNTEPENSQGSAADEDEIS. Coiled-coil stretches lie at residues 1251–1310, 1362–1424, 1522–1542, and 1603–1630; these read NSSL…FQEN, IRDM…WHEK, LKKATEAESTTELELVKAKNE, and LAGSEKLVDKLSLRVKEFEEKLQTKAIQ. The chain crosses the membrane as a helical; Anchor for type IV membrane protein span at residues 1749–1766; sequence LGVMVYSLLLHLWLLASI. Position 1767 (Leu-1767) is a topological domain, vesicular.

Interacts with SYP41. Expressed ubiquitously in roots, leaves and flowers, and, to a lower extent, in stems.

It localises to the golgi apparatus. The protein localises to the trans-Golgi network membrane. Functionally, tethering factor involved in vesicle fusion at the trans-Golgi network (TGN) thus being required for efficient protein trafficking to the vacuole. Implicated in resistance to salt and osmotic stresses. Modulates the cell morphology (e.g. epidermal cell file rotation (CFR) and cell expansion) in mature regions of roots and the base of hypocotyls as well as root skewing, a process leading to root movement within the soil in order to maximize anchorage and nutrient acquisition, probably by regulating microtubule stabilization independently of their orientation. This Arabidopsis thaliana (Mouse-ear cress) protein is Trans-Golgi network-localized SYP41-interacting protein 1.